Reading from the N-terminus, the 173-residue chain is Crossover junction endodeoxyribonuclease RuvC (173 aa).

Residues aspartate 8, glutamate 67, and aspartate 139 contribute to the active site. 3 residues coordinate Mg(2+): aspartate 8, glutamate 67, and aspartate 139.

It belongs to the RuvC family. As to quaternary structure, homodimer which binds Holliday junction (HJ) DNA. The HJ becomes 2-fold symmetrical on binding to RuvC with unstacked arms; it has a different conformation from HJ DNA in complex with RuvA. In the full resolvosome a probable DNA-RuvA(4)-RuvB(12)-RuvC(2) complex forms which resolves the HJ. The cofactor is Mg(2+).

The protein localises to the cytoplasm. The enzyme catalyses Endonucleolytic cleavage at a junction such as a reciprocal single-stranded crossover between two homologous DNA duplexes (Holliday junction).. In terms of biological role, the RuvA-RuvB-RuvC complex processes Holliday junction (HJ) DNA during genetic recombination and DNA repair. Endonuclease that resolves HJ intermediates. Cleaves cruciform DNA by making single-stranded nicks across the HJ at symmetrical positions within the homologous arms, yielding a 5'-phosphate and a 3'-hydroxyl group; requires a central core of homology in the junction. The consensus cleavage sequence is 5'-(A/T)TT(C/G)-3'. Cleavage occurs on the 3'-side of the TT dinucleotide at the point of strand exchange. HJ branch migration catalyzed by RuvA-RuvB allows RuvC to scan DNA until it finds its consensus sequence, where it cleaves and resolves the cruciform DNA. This chain is Crossover junction endodeoxyribonuclease RuvC, found in Vibrio vulnificus (strain YJ016).